The following is a 348-amino-acid chain: Trace amine-associated receptor 9 (348 aa).

The Extracellular portion of the chain corresponds to 1 to 33 (MTSDFSPEPPMELCYENVNGSCIKSSYAPWPRA). N-linked (GlcNAc...) asparagine glycosylation occurs at N19. Cystine bridges form between C22/C186 and C105/C190. A helical transmembrane segment spans residues 34–58 (ILYGVLGLGALLAVFGNLLVIIAIL). Topologically, residues 59–68 (HFKQLHTPTN) are cytoplasmic. A helical transmembrane segment spans residues 69–90 (FLVASLACADFLVGVTVMPFST). Topologically, residues 91–105 (VRSVESCWYFGESYC) are extracellular. Residues 106-128 (KFHTCFDTSFCFASLFHLCCISI) traverse the membrane as a helical segment. Spermidine is bound by residues D112 and T113. Residues 129–148 (DRYIAVTDPLTYPTKFTVSV) lie on the Cytoplasmic side of the membrane. A helical transmembrane segment spans residues 149–170 (SGLCIALSWFFSVTYSFSIFYT). Topologically, residues 171–196 (GANEEGIEELVVALTCVGGCQAPLNQ) are extracellular. The segment at 174-187 (EEGIEELVVALTCV) is extracellular Loop 2 (ECL2). Residues 197–218 (NWVLLCFLLFFLPTVVMVFLYG) traverse the membrane as a helical segment. Over 219–256 (RIFLVAKYQARKIEGTANQAQASSESYKERVAKRERKA) the chain is Cytoplasmic. The chain crosses the membrane as a helical span at residues 257 to 280 (AKTLGIAMAAFLVSWLPYIIDAVI). The Extracellular portion of the chain corresponds to 281 to 293 (DAYMNFITPAYVY). A helical transmembrane segment spans residues 294-314 (EILVWCVYYNSAMNPLIYAFF). Residues 315-348 (YPWFRKAIKLIVSGKVFRADSSTTNLFSEEAGAG) are Cytoplasmic-facing.

The protein belongs to the G-protein coupled receptor 1 family. As to expression, specifically expressed in neurons of the olfactory epithelium.

Its subcellular location is the cell membrane. Functionally, olfactory receptor specific for trace amines, such as triethylamine, N,N-dimethylcyclohexylamine (DMCHA), beta-phenylethylamine (beta-PEA), cadaverine (CAD) and polyamines such as spermine and spermidine. Trace amine compounds are enriched in animal body fluids and act on trace amine-associated receptors (TAARs) to elicit both intraspecific and interspecific innate behaviors. Trace amine-binding causes a conformation change that triggers signaling via G(s)-class of G alpha proteins (GNAL or GNAS). In mature olfactory sensory neurons, Taar9 is coupled with GNAL/G(olf)G alpha protein and mediates activation of adenylate cyclase activity to activate cAMP signaling and eventually transmit odorant signals to achieve membrane depolarization. In immature olfactory sensory neurons, Taar9 is coupled with GNAS/G(s) G alpha proteins. This is Trace amine-associated receptor 9 from Mus musculus (Mouse).